The primary structure comprises 71 residues: Omega-conotoxin-like Ac6.4 (71 aa).

The signal sequence occupies residues 1–22 (MKLTCVVIVAVLLLTACQLLTA). Positions 23 to 45 (DDSRGTQKHRALRSDTKLSMSTR) are excised as a propeptide. 3 cysteine pairs are disulfide-bonded: C46-C61, C53-C65, and C60-C70. The residue at position 70 (C70) is a Cysteine amide.

It belongs to the conotoxin O1 superfamily. As to expression, expressed by the venom duct.

Its subcellular location is the secreted. In terms of biological role, omega-conotoxins act at presynaptic membranes, they bind and block voltage-gated calcium channels (Cav). The chain is Omega-conotoxin-like Ac6.4 from Conus achatinus (Little frog cone).